We begin with the raw amino-acid sequence, 217 residues long: Oxygen regulatory protein NreC (217 aa).

Residues 2-119 (KIVIADDHAV…QLISAVRTVY (118 aa)) enclose the Response regulatory domain. Aspartate 53 carries the post-translational modification 4-aspartylphosphate. The region spanning 148–213 (TNDPFRILSK…ELVEYALKKK (66 aa)) is the HTH luxR-type domain. A DNA-binding region (H-T-H motif) is located at residues 172-191 (NKEIAEKLFVSVKTVEAHKT).

Post-translationally, phosphorylated by NreB.

The protein localises to the cytoplasm. In terms of biological role, member of the two-component regulatory system NreB/NreC involved in the control of dissimilatory nitrate/nitrite reduction in response to oxygen. Phosphorylated NreC binds to a GC-rich palindromic sequence at the promoters of the nitrate (narGHJI) and nitrite (nir) reductase operons, as well as the putative nitrate transporter gene narT, and activates their expression. The sequence is that of Oxygen regulatory protein NreC (nreC) from Staphylococcus carnosus (strain TM300).